The primary structure comprises 421 residues: Phosphatidylinositol 5-phosphate 4-kinase type-2 gamma (421 aa).

Ala2 is modified (N-acetylalanine). Residue Ser26 is modified to Phosphoserine. The 378-residue stretch at Ala43 to Phe420 folds into the PIPK domain. Residues Val69 to Asp75 form a required for interaction with PIP5K1A region. A Phosphoserine modification is found at Ser349.

Interacts with PIP5K1A; the interaction inhibits PIP5K1A kinase activity. Post-translationally, phosphorylated, phosphorylation is induced by EGF.

The protein resides in the endoplasmic reticulum. The protein localises to the cytoplasm. The enzyme catalyses a 1,2-diacyl-sn-glycero-3-phospho-(1D-myo-inositol-5-phosphate) + ATP = a 1,2-diacyl-sn-glycero-3-phospho-(1D-myo-inositol-4,5-bisphosphate) + ADP + H(+). It carries out the reaction 1,2-dihexadecanoyl-sn-glycero-3-phospho-(1D-myo-inositol-5-phosphate) + ATP = 1,2-dihexadecanoyl-sn-glycero-3-phospho-(1D-myo-inositol-4,5-bisphosphate) + ADP + H(+). It catalyses the reaction 1,2-dihexadecanoyl-sn-glycero-3-phospho-(1D-myo-inositol-5-phosphate) + GTP = 1,2-dihexadecanoyl-sn-glycero-3-phospho-(1D-myo-inositol-4,5-bisphosphate) + GDP + H(+). In terms of biological role, phosphatidylinositol 5-phosphate 4-kinase with low enzymatic activity. May be a GTP sensor, has higher GTP-dependent kinase activity than ATP-dependent kinase activity. PIP4Ks negatively regulate insulin signaling through a catalytic-independent mechanism. They interact with PIP5Ks and suppress PIP5K-mediated PtdIns(4,5)P2 synthesis and insulin-dependent conversion to PtdIns(3,4,5)P3. This chain is Phosphatidylinositol 5-phosphate 4-kinase type-2 gamma (PIP4K2C), found in Pongo abelii (Sumatran orangutan).